A 187-amino-acid polypeptide reads, in one-letter code: Elongation factor P (187 aa).

The protein belongs to the elongation factor P family.

It localises to the cytoplasm. It functions in the pathway protein biosynthesis; polypeptide chain elongation. Its function is as follows. Involved in peptide bond synthesis. Stimulates efficient translation and peptide-bond synthesis on native or reconstituted 70S ribosomes in vitro. Probably functions indirectly by altering the affinity of the ribosome for aminoacyl-tRNA, thus increasing their reactivity as acceptors for peptidyl transferase. The protein is Elongation factor P of Flavobacterium psychrophilum (strain ATCC 49511 / DSM 21280 / CIP 103535 / JIP02/86).